A 100-amino-acid polypeptide reads, in one-letter code: Defensin-B4 (100 aa).

The signal sequence occupies residues 1 to 22 (MRASLLLFILLVYLAHAPQAQG). Residues 23-26 (VFGP) constitute a propeptide that is removed on maturation. Cystine bridges form between Cys29–Cys56, Cys36–Cys50, and Cys40–Cys57. The disordered stretch occupies residues 60-100 (STGTSSSQGSHEVPVINSEPALESKPEPQDTQEEEATMVSE). The segment covering 89 to 100 (DTQEEEATMVSE) has biased composition (acidic residues).

This sequence belongs to the beta-defensin family. As to expression, highly expressed in kidney, lowly expressed in spleen, and expressed at lower levels in lung.

The protein localises to the secreted. Has antimicrobial activity. In Ornithorhynchus anatinus (Duckbill platypus), this protein is Defensin-B4.